The primary structure comprises 199 residues: Imidazole glycerol phosphate synthase subunit HisH 2 (199 aa).

The 199-residue stretch at 1-199 (MIAVIDVSGN…NNFLSLESKC (199 aa)) folds into the Glutamine amidotransferase type-1 domain. Catalysis depends on Cys76, which acts as the Nucleophile. Residues His177 and Glu179 contribute to the active site.

As to quaternary structure, heterodimer of HisH and HisF.

It localises to the cytoplasm. The enzyme catalyses 5-[(5-phospho-1-deoxy-D-ribulos-1-ylimino)methylamino]-1-(5-phospho-beta-D-ribosyl)imidazole-4-carboxamide + L-glutamine = D-erythro-1-(imidazol-4-yl)glycerol 3-phosphate + 5-amino-1-(5-phospho-beta-D-ribosyl)imidazole-4-carboxamide + L-glutamate + H(+). It carries out the reaction L-glutamine + H2O = L-glutamate + NH4(+). The protein operates within amino-acid biosynthesis; L-histidine biosynthesis; L-histidine from 5-phospho-alpha-D-ribose 1-diphosphate: step 5/9. Its function is as follows. IGPS catalyzes the conversion of PRFAR and glutamine to IGP, AICAR and glutamate. The HisH subunit provides the glutamine amidotransferase activity that produces the ammonia necessary to HisF for the synthesis of IGP and AICAR. The chain is Imidazole glycerol phosphate synthase subunit HisH 2 from Legionella pneumophila (strain Lens).